The primary structure comprises 88 residues: Large ribosomal subunit protein eL34 (88 aa).

Belongs to the eukaryotic ribosomal protein eL34 family.

The polypeptide is Large ribosomal subunit protein eL34 (Saccharolobus solfataricus (strain ATCC 35092 / DSM 1617 / JCM 11322 / P2) (Sulfolobus solfataricus)).